Consider the following 372-residue polypeptide: Putative RING-H2 finger protein ATL21A (372 aa).

Residues 1–20 (MTFSKQLFLYLFFLFPLLHA) form the signal peptide. A helical membrane pass occupies residues 242-262 (IILLSIIGPLTIFATCIAVGV). The RING-type; atypical zinc-finger motif lies at 320–362 (CPICLSEYASKETVRCIPECDHCFHSECIDVWLKIHGSCPLCR).

It belongs to the RING-type zinc finger family. ATL subfamily.

It is found in the membrane. The catalysed reaction is S-ubiquitinyl-[E2 ubiquitin-conjugating enzyme]-L-cysteine + [acceptor protein]-L-lysine = [E2 ubiquitin-conjugating enzyme]-L-cysteine + N(6)-ubiquitinyl-[acceptor protein]-L-lysine.. It functions in the pathway protein modification; protein ubiquitination. In Arabidopsis thaliana (Mouse-ear cress), this protein is Putative RING-H2 finger protein ATL21A (ATL21A).